The chain runs to 186 residues: Bis(5'-nucleosyl)-tetraphosphatase, symmetrical (186 aa).

The HD domain occupies 18-132; that stretch reads RYIHTVGVMN…IYVADYIEPN (115 aa). His-21 provides a ligand contact to ADP. The Fe cation site is built by His-21, His-50, and Asp-51. ADP is bound by residues 51–54, His-83, 109–110, Asp-127, Arg-133, and 170–175; these read DYAK, HT, and PVFPDT. Asp-127 provides a ligand contact to Fe cation.

This sequence belongs to the Ap4A hydrolase YqeK family. As to quaternary structure, homodimer.

The enzyme catalyses P(1),P(4)-bis(5'-adenosyl) tetraphosphate + H2O = 2 ADP + 2 H(+). Its function is as follows. Hydrolyzes diadenosine 5',5'''-P1,P4-tetraphosphate (Ap4A) to yield ADP. The chain is Bis(5'-nucleosyl)-tetraphosphatase, symmetrical (yqeK) from Bacillus subtilis (strain 168).